The primary structure comprises 181 residues: ATP-dependent protease subunit HslV (181 aa).

Threonine 9 is an active-site residue. Positions 166, 169, and 172 each coordinate Na(+).

Belongs to the peptidase T1B family. HslV subfamily. A double ring-shaped homohexamer of HslV is capped on each side by a ring-shaped HslU homohexamer. The assembly of the HslU/HslV complex is dependent on binding of ATP.

It localises to the cytoplasm. It carries out the reaction ATP-dependent cleavage of peptide bonds with broad specificity.. Allosterically activated by HslU binding. Functionally, protease subunit of a proteasome-like degradation complex believed to be a general protein degrading machinery. The sequence is that of ATP-dependent protease subunit HslV from Staphylococcus aureus (strain JH1).